The following is a 456-amino-acid chain: Bifunctional protein GlmU (456 aa).

Residues methionine 1–arginine 228 form a pyrophosphorylase region. UDP-N-acetyl-alpha-D-glucosamine is bound by residues leucine 8–glycine 11, lysine 22, glutamine 72, glycine 77–threonine 78, tyrosine 99–aspartate 101, glycine 138, glutamate 153, asparagine 168, and asparagine 226. Aspartate 101 provides a ligand contact to Mg(2+). Mg(2+) is bound at residue asparagine 226. Residues glutamate 229–alanine 249 are linker. An N-acetyltransferase region spans residues glycine 250–lysine 456. UDP-N-acetyl-alpha-D-glucosamine is bound by residues arginine 331 and lysine 349. The Proton acceptor role is filled by histidine 361. UDP-N-acetyl-alpha-D-glucosamine-binding residues include tyrosine 364 and asparagine 375. Acetyl-CoA-binding positions include asparagine 384–tyrosine 385, serine 403, serine 421, and arginine 438.

It in the N-terminal section; belongs to the N-acetylglucosamine-1-phosphate uridyltransferase family. The protein in the C-terminal section; belongs to the transferase hexapeptide repeat family. Homotrimer. Mg(2+) serves as cofactor.

It localises to the cytoplasm. It carries out the reaction alpha-D-glucosamine 1-phosphate + acetyl-CoA = N-acetyl-alpha-D-glucosamine 1-phosphate + CoA + H(+). The catalysed reaction is N-acetyl-alpha-D-glucosamine 1-phosphate + UTP + H(+) = UDP-N-acetyl-alpha-D-glucosamine + diphosphate. It participates in nucleotide-sugar biosynthesis; UDP-N-acetyl-alpha-D-glucosamine biosynthesis; N-acetyl-alpha-D-glucosamine 1-phosphate from alpha-D-glucosamine 6-phosphate (route II): step 2/2. Its pathway is nucleotide-sugar biosynthesis; UDP-N-acetyl-alpha-D-glucosamine biosynthesis; UDP-N-acetyl-alpha-D-glucosamine from N-acetyl-alpha-D-glucosamine 1-phosphate: step 1/1. The protein operates within bacterial outer membrane biogenesis; LPS lipid A biosynthesis. Catalyzes the last two sequential reactions in the de novo biosynthetic pathway for UDP-N-acetylglucosamine (UDP-GlcNAc). The C-terminal domain catalyzes the transfer of acetyl group from acetyl coenzyme A to glucosamine-1-phosphate (GlcN-1-P) to produce N-acetylglucosamine-1-phosphate (GlcNAc-1-P), which is converted into UDP-GlcNAc by the transfer of uridine 5-monophosphate (from uridine 5-triphosphate), a reaction catalyzed by the N-terminal domain. The chain is Bifunctional protein GlmU from Alkaliphilus metalliredigens (strain QYMF).